An 85-amino-acid polypeptide reads, in one-letter code: U4-theraphotoxin-Hhn1r (85 aa).

The N-terminal stretch at 1 to 22 (MKVTLIAILTCAAVLVLHTTAA) is a signal peptide. Positions 23-48 (EELEAESQLMEVGMPDTELAAVDEER) are excised as a propeptide. Disulfide bonds link C52/C66, C56/C77, and C71/C82.

Belongs to the neurotoxin 12 (Hwtx-2) family. 02 (Hwtx-2) subfamily. In terms of tissue distribution, expressed by the venom gland.

It localises to the secreted. Functionally, postsynaptic neurotoxin. The protein is U4-theraphotoxin-Hhn1r of Cyriopagopus hainanus (Chinese bird spider).